Here is a 495-residue protein sequence, read N- to C-terminus: L-arabinose isomerase (495 aa).

Mn(2+) is bound by residues E305, E332, H349, and H448.

The protein belongs to the arabinose isomerase family. Mn(2+) serves as cofactor.

The catalysed reaction is beta-L-arabinopyranose = L-ribulose. It participates in carbohydrate degradation; L-arabinose degradation via L-ribulose; D-xylulose 5-phosphate from L-arabinose (bacterial route): step 1/3. Functionally, catalyzes the conversion of L-arabinose to L-ribulose. The chain is L-arabinose isomerase from Actinobacillus succinogenes (strain ATCC 55618 / DSM 22257 / CCUG 43843 / 130Z).